A 281-amino-acid polypeptide reads, in one-letter code: Phosphonates import ATP-binding protein PhnC (281 aa).

Residues 2-245 (FELKDVTRRF…AVKEIYGTDK (244 aa)) form the ABC transporter domain. 34 to 41 (GRSGAGKS) is an ATP binding site.

Belongs to the ABC transporter superfamily. Phosphonates importer (TC 3.A.1.9.1) family. In terms of assembly, the complex is composed of two ATP-binding proteins (PhnC), two transmembrane proteins (PhnE) and a solute-binding protein (PhnD).

It is found in the cell inner membrane. The enzyme catalyses phosphonate(out) + ATP + H2O = phosphonate(in) + ADP + phosphate + H(+). In terms of biological role, part of the ABC transporter complex PhnCDE involved in phosphonates import. Responsible for energy coupling to the transport system. This is Phosphonates import ATP-binding protein PhnC from Rhizobium etli (strain ATCC 51251 / DSM 11541 / JCM 21823 / NBRC 15573 / CFN 42).